The primary structure comprises 497 residues: Transmembrane protein 200A (497 aa).

The Cytoplasmic portion of the chain corresponds to 1-61 (MIATGGVITG…RGKIRLYSAS (61 aa)). Residues 20 to 30 (TRSQYHLSAQS) show a composition bias toward polar residues. The disordered stretch occupies residues 20–44 (TRSQYHLSAQSPGPAPEKKTTKRKP). A helical membrane pass occupies residues 62 to 82 (GFFLVLGVLILMAGIAMAVLG). Residues 83–127 (YWPHKDQPKAPETKMSANNTQSFGREQAGSIAQFLEQHMHSEKMK) are Extracellular-facing. The N-linked (GlcNAc...) asparagine glycan is linked to N100. A helical membrane pass occupies residues 128–148 (MLGPFTMGIGIFIFICANAIL). At 149–497 (HENRDRETKV…LKRGTSETRF (349 aa)) the chain is on the cytoplasmic side. Residues 353–375 (SNSATESASSTSSRSSLSPGSTS) show a composition bias toward low complexity. Disordered stretches follow at residues 353 to 385 (SNSATESASSTSSRSSLSPGSTSGRFLSPGAAR) and 400 to 438 (HSKSLDLERGPTKLTVQPEQRKHPSWPRLDRSNSKGYTR). The segment covering 427–438 (RLDRSNSKGYTR) has biased composition (basic and acidic residues).

Belongs to the TMEM200 family.

The protein resides in the membrane. This is Transmembrane protein 200A (tmem200a) from Danio rerio (Zebrafish).